The following is a 281-amino-acid chain: Diaminopimelate epimerase (281 aa).

Substrate is bound by residues Asn13 and Asn66. The active-site Proton donor is the Cys75. Residues 76 to 77 (GN), Asn164, Asn197, and 215 to 216 (ER) each bind substrate. The active-site Proton acceptor is Cys224. 225 to 226 (GT) lines the substrate pocket.

It belongs to the diaminopimelate epimerase family. As to quaternary structure, homodimer.

The protein resides in the cytoplasm. It catalyses the reaction (2S,6S)-2,6-diaminopimelate = meso-2,6-diaminopimelate. Its pathway is amino-acid biosynthesis; L-lysine biosynthesis via DAP pathway; DL-2,6-diaminopimelate from LL-2,6-diaminopimelate: step 1/1. In terms of biological role, catalyzes the stereoinversion of LL-2,6-diaminopimelate (L,L-DAP) to meso-diaminopimelate (meso-DAP), a precursor of L-lysine and an essential component of the bacterial peptidoglycan. This Picosynechococcus sp. (strain ATCC 27264 / PCC 7002 / PR-6) (Agmenellum quadruplicatum) protein is Diaminopimelate epimerase.